The primary structure comprises 161 residues: Cyclic pyranopterin monophosphate synthase (161 aa).

Substrate contacts are provided by residues 75 to 77 (LCH) and 113 to 114 (ME). Asp-128 is an active-site residue.

This sequence belongs to the MoaC family. Homohexamer; trimer of dimers.

The enzyme catalyses (8S)-3',8-cyclo-7,8-dihydroguanosine 5'-triphosphate = cyclic pyranopterin phosphate + diphosphate. It functions in the pathway cofactor biosynthesis; molybdopterin biosynthesis. Functionally, catalyzes the conversion of (8S)-3',8-cyclo-7,8-dihydroguanosine 5'-triphosphate to cyclic pyranopterin monophosphate (cPMP). This is Cyclic pyranopterin monophosphate synthase from Salmonella heidelberg (strain SL476).